The sequence spans 2253 residues: Genome polyprotein (2253 aa).

A disulfide bridge connects residues Cys-627 and Cys-694. The Cell attachment site motif lies at 750–752; that stretch reads RVD. The LRAT domain maps to 825-920; that stretch reads LVYKNRGFYK…LFPGRKEITQ (96 aa). Residues His-835 and His-846 each act as for protein 2A H-NC in the active site. The active-site For protein 2A H-NC; Acyl-thioester intermediate is the Cys-904. The helical transmembrane segment at 1002 to 1022 threads the bilayer; that stretch reads IVLYCHAPNMLTTMCLGTLLV. The 162-residue stretch at 1205–1366 folds into the SF3 helicase domain; that stretch reads YSEMMRVNVR…ASYSRNNKLD (162 aa). O-(5'-phospho-RNA)-tyrosine is present on Tyr-1559. The 190-residue stretch at 1586–1775 folds into the Peptidase C3 domain; it reads APYMQDLEHC…RAAAVHFISN (190 aa). Residues His-1626, Asp-1664, and Cys-1739 each act as for protease 3C activity in the active site. The active-site Acyl-thioester intermediate is the Cys-1970. One can recognise a RdRp catalytic domain in the interval 2018–2132; it reads PYNYGLDYSS…SVSSPLDAEY (115 aa). Residues Asp-2024 and Asp-2118 each coordinate Mg(2+).

Belongs to the picornaviruses polyprotein family. Interacts with capsid protein VP1 and capsid protein VP3 to form heterotrimeric protomers. Five protomers subsequently associate to form pentamers which serve as building blocks for the capsid. As to quaternary structure, interacts with capsid protein VP0, and capsid protein VP3 to form heterotrimeric protomers. Five protomers subsequently associate to form pentamers which serve as building blocks for the capsid. In terms of assembly, interacts with capsid protein VP0 and capsid protein VP1 to form heterotrimeric protomers. Five protomers subsequently associate to form pentamers which serve as building blocks for the capsid. Homohexamer; forms a hexameric ring structure with 6-fold symmetry characteristic of AAA+ ATPases. As to quaternary structure, homodimer. Interacts with host ACBD3. In terms of assembly, interacts with RNA-directed RNA polymerase. Interacts with Viral protein genome-linked. Requires Mg(2+) as cofactor. In terms of processing, VPg is uridylylated by the polymerase and is covalently linked to the 5'-end of genomic RNA. This uridylylated form acts as a nucleotide-peptide primer for the polymerase. Post-translationally, specific enzymatic cleavages yield mature proteins. All cleavages are catalyzed by P3C.

The protein localises to the virion. It localises to the host cytoplasm. Its subcellular location is the host nucleus. The protein resides in the host nucleolus. It is found in the host cytoplasmic vesicle membrane. The protein localises to the host endoplasmic reticulum membrane. It localises to the host Golgi apparatus membrane. The enzyme catalyses RNA(n) + a ribonucleoside 5'-triphosphate = RNA(n+1) + diphosphate. It carries out the reaction a ribonucleoside 5'-triphosphate + H2O = a ribonucleoside 5'-diphosphate + phosphate + H(+). It catalyses the reaction Selective cleavage of Gln-|-Gly bond in the poliovirus polyprotein. In other picornavirus reactions Glu may be substituted for Gln, and Ser or Thr for Gly.. Functionally, forms an icosahedral capsid of pseudo T=3 symmetry together with capsid proteins VP1 and VP3. The capsid is 300 Angstroms in diameter, composed of 60 copies of each capsid protein and enclosing the viral positive strand RNA genome. The attachment to the host cell receptor induces virion internalization predominantly through clathrin-mediated endocytosis. Binds packaging signals present in the viral RNA. Its function is as follows. Forms an icosahedral capsid of pseudo T=3 symmetry together with capsid proteins VP0 and VP1. The capsid is 300 Angstroms in diameter, composed of 60 copies of each capsid protein and enclosing the viral positive strand RNA genome. The attachment to the host cell receptor induces virion internalization predominantly through clathrin-mediated endocytosis. Binds packaging signals present in the viral RNA. Forms an icosahedral capsid of pseudo T=3 symmetry together with capsid proteins VP0 and VP3. The capsid is 300 Angstroms in diameter, composed of 60 copies of each capsid protein and enclosing the viral positive strand RNA genome. The attachment to the host cell receptor induces virion internalization predominantly through clathrin-mediated endocytosis. Binds packaging signals present in the viral RNA. In terms of biological role, mediates self-processing of the polyprotein by a translational effect termed 'ribosome skipping'. Mechanistically, 2A1-mediated cleavage occurs between the C-terminal glycine and the proline of the downstream protein 2A2. Functionally, plays an essential role in the virus replication cycle by acting as a viroporin. Creates a pore in the host endoplasmic reticulum and as a consequence releases Ca2+ in the cytoplasm of infected cell. In turn, high levels of cytoplasmic calcium may trigger membrane trafficking and transport of viral ER-associated proteins to viroplasms, sites of viral genome replication. Its function is as follows. Induces and associates with structural rearrangements of intracellular membranes. Displays RNA-binding, nucleotide binding and NTPase activities. May play a role in virion morphogenesis and viral RNA encapsidation by interacting with the capsid protein VP3. Localizes the viral replication complex to the surface of membranous vesicles. It inhibits host cell endoplasmic reticulum-to-Golgi apparatus transport and causes the disassembly of the Golgi complex, possibly through GBF1 interaction. This would result in depletion of MHC, trail receptors and IFN receptors at the host cell surface. Plays an essential role in viral RNA replication by recruiting ACBD3 and PI4KB at the viral replication sites, thereby allowing the formation of the rearranged membranous structures where viral replication takes place. In terms of biological role, acts as a primer for viral RNA replication and remains covalently bound to viral genomic RNA. VPg is uridylylated prior to priming replication into VPg-pUpU. The VPg-pUpU is then used as primer on the genomic RNA poly(A) by the RNA-dependent RNA polymerase to replicate the viral genome. Following genome release from the infecting virion in the cytoplasm, the VPg-RNA linkage is probably removed by host TDP2. During the late stage of the replication cycle, host TDP2 is excluded from sites of viral RNA synthesis and encapsidation, allowing for the generation of progeny virions. Functionally, cysteine protease that generates mature viral proteins from the precursor polyprotein. In addition to its proteolytic activity, it binds to viral RNA, and thus influences viral genome replication. RNA and substrate bind cooperatively to the protease. Its function is as follows. Replicates the viral genomic RNA on the surface of intracellular membranes. Covalently attaches UMP to a tyrosine of VPg, which is used to prime RNA synthesis. The positive stranded RNA genome is first replicated at virus induced membranous vesicles, creating a dsRNA genomic replication form. This dsRNA is then used as template to synthesize positive stranded RNA genomes. ss(+)RNA genomes are either translated, replicated or encapsidated. The sequence is that of Genome polyprotein from Ljunganvirus 1 (LV).